Here is a 42-residue protein sequence, read N- to C-terminus: Perlinhibin-related protein (42 aa).

In terms of processing, contains four disulfide bonds.

In terms of biological role, inhibitor of shell growth. In Haliotis laevigata (Smooth Australian abalone), this protein is Perlinhibin-related protein.